A 319-amino-acid polypeptide reads, in one-letter code: Acetyl-coenzyme A carboxylase carboxyl transferase subunit alpha (319 aa).

The CoA carboxyltransferase C-terminal domain occupies Asp-35–Glu-296.

This sequence belongs to the AccA family. In terms of assembly, acetyl-CoA carboxylase is a heterohexamer composed of biotin carboxyl carrier protein (AccB), biotin carboxylase (AccC) and two subunits each of ACCase subunit alpha (AccA) and ACCase subunit beta (AccD).

The protein resides in the cytoplasm. It carries out the reaction N(6)-carboxybiotinyl-L-lysyl-[protein] + acetyl-CoA = N(6)-biotinyl-L-lysyl-[protein] + malonyl-CoA. It participates in lipid metabolism; malonyl-CoA biosynthesis; malonyl-CoA from acetyl-CoA: step 1/1. Its function is as follows. Component of the acetyl coenzyme A carboxylase (ACC) complex. First, biotin carboxylase catalyzes the carboxylation of biotin on its carrier protein (BCCP) and then the CO(2) group is transferred by the carboxyltransferase to acetyl-CoA to form malonyl-CoA. This is Acetyl-coenzyme A carboxylase carboxyl transferase subunit alpha from Aliivibrio salmonicida (strain LFI1238) (Vibrio salmonicida (strain LFI1238)).